Consider the following 410-residue polypeptide: Chaperonin GroEL (410 aa).

ATP-binding positions include 29–32, lysine 50, and 86–90; these read TAGP and DGTTT.

The protein belongs to the chaperonin (HSP60) family. In terms of assembly, forms a cylinder of 14 subunits composed of two heptameric rings stacked back-to-back. Interacts with the co-chaperonin GroES.

The protein localises to the cytoplasm. It carries out the reaction ATP + H2O + a folded polypeptide = ADP + phosphate + an unfolded polypeptide.. Together with its co-chaperonin GroES, plays an essential role in assisting protein folding. The GroEL-GroES system forms a nano-cage that allows encapsulation of the non-native substrate proteins and provides a physical environment optimized to promote and accelerate protein folding. The polypeptide is Chaperonin GroEL (Ehrlichia canis).